We begin with the raw amino-acid sequence, 184 residues long: UPF0301 protein ABSDF3201 (184 aa).

The protein belongs to the UPF0301 (AlgH) family.

The polypeptide is UPF0301 protein ABSDF3201 (Acinetobacter baumannii (strain SDF)).